The sequence spans 416 residues: Adenosylhomocysteinase (416 aa).

Residues Thr-55, Asp-126, and Glu-151 each coordinate substrate. 152–154 (TTT) is an NAD(+) binding site. Positions 181 and 185 each coordinate substrate. Residues Asn-186, 215 to 220 (GYGWVG), Glu-238, Asn-273, 294 to 296 (AGH), and Asn-341 contribute to the NAD(+) site.

This sequence belongs to the adenosylhomocysteinase family. NAD(+) serves as cofactor.

The protein localises to the cytoplasm. The enzyme catalyses S-adenosyl-L-homocysteine + H2O = L-homocysteine + adenosine. It functions in the pathway amino-acid biosynthesis; L-homocysteine biosynthesis; L-homocysteine from S-adenosyl-L-homocysteine: step 1/1. May play a key role in the regulation of the intracellular concentration of adenosylhomocysteine. This Aeropyrum pernix (strain ATCC 700893 / DSM 11879 / JCM 9820 / NBRC 100138 / K1) protein is Adenosylhomocysteinase.